The sequence spans 344 residues: Fe-S cluster assembly protein DRE2 (344 aa).

The segment at 1-160 (MTSNILLLLH…KKLNNDNAST (160 aa)) is N-terminal SAM-like domain. A disordered region spans residues 154-179 (NNDNASTPGLTDSSAGTSEDETATVS). Residues 155–170 (NDNASTPGLTDSSAGT) show a composition bias toward polar residues. Residues 161-223 (PGLTDSSAGT…NDLIAESNKY (63 aa)) form a linker region. The [2Fe-2S] cluster site is built by Cys-231, Cys-243, Cys-246, and Cys-248. Positions 231–248 (CELPNGKKRKKACKDCTC) are fe-S binding site A. Cys-313, Cys-316, Cys-324, and Cys-327 together coordinate [4Fe-4S] cluster. 2 consecutive short sequence motifs (cx2C motif) follow at residues 313 to 316 (CGSC) and 324 to 327 (CDGC). The fe-S binding site B stretch occupies residues 313 to 327 (CGSCSLGDAFRCDGC).

Belongs to the anamorsin family. In terms of assembly, monomer. Interacts with TAH18. Interacts with MIA40. [2Fe-2S] cluster is required as a cofactor. Requires [4Fe-4S] cluster as cofactor.

It is found in the cytoplasm. The protein resides in the mitochondrion intermembrane space. Component of the cytosolic iron-sulfur (Fe-S) protein assembly (CIA) machinery required for the maturation of extramitochondrial Fe-S proteins. Part of an electron transfer chain functioning in an early step of cytosolic Fe-S biogenesis, facilitating the de novo assembly of a [4Fe-4S] cluster on the scaffold complex CFD1-NBP35. Electrons are transferred to DRE2 from NADPH via the FAD- and FMN-containing protein TAH18. TAH18-DRE2 are also required for the assembly of the diferric tyrosyl radical cofactor of ribonucleotide reductase (RNR), probably by providing electrons for reduction during radical cofactor maturation in the catalytic small subunit RNR2. The polypeptide is Fe-S cluster assembly protein DRE2 (Candida tropicalis (strain ATCC MYA-3404 / T1) (Yeast)).